We begin with the raw amino-acid sequence, 588 residues long: Putative ABC transporter ATP-binding protein PAM_020 (588 aa).

ABC transporter domains lie at 6-247 (IIFK…GIQE) and 317-551 (LQLQ…TSLN). ATP-binding positions include 40 to 47 (GKNGSGKS) and 351 to 358 (GKNGSGKS).

This sequence belongs to the ABC transporter superfamily.

It is found in the cell membrane. Functionally, probably part of an ABC transporter complex. Responsible for energy coupling to the transport system. This Onion yellows phytoplasma (strain OY-M) protein is Putative ABC transporter ATP-binding protein PAM_020.